Consider the following 723-residue polypeptide: Malate synthase G (723 aa).

Residues Val118, 125-126 (RY), Ser274, and Arg311 each bind acetyl-CoA. The active-site Proton acceptor is Arg338. Glyoxylate-binding positions include Arg338, Glu427, and 452 to 455 (GFLD). 2 residues coordinate Mg(2+): Glu427 and Asp455. Residue Pro536 coordinates acetyl-CoA. The residue at position 617 (Cys617) is a Cysteine sulfenic acid (-SOH). Asp631 (proton donor) is an active-site residue. Cys688 carries the post-translational modification Cysteine sulfenic acid (-SOH).

The protein belongs to the malate synthase family. GlcB subfamily. Monomer. The cofactor is Mg(2+).

It is found in the cytoplasm. The catalysed reaction is glyoxylate + acetyl-CoA + H2O = (S)-malate + CoA + H(+). It participates in carbohydrate metabolism; glyoxylate cycle; (S)-malate from isocitrate: step 2/2. Functionally, involved in the glycolate utilization. Catalyzes the condensation and subsequent hydrolysis of acetyl-coenzyme A (acetyl-CoA) and glyoxylate to form malate and CoA. The polypeptide is Malate synthase G (Escherichia coli O6:H1 (strain CFT073 / ATCC 700928 / UPEC)).